The sequence spans 151 residues: Neuroglobin (151 aa).

The region spanning 1 to 149 (MERPEPELIR…VVQAMSRGWD (149 aa)) is the Globin domain. An intrachain disulfide couples C46 to C55. Residues H64 and H96 each contribute to the heme b site.

The protein belongs to the globin family. In terms of assembly, monomer. Homodimer and homotetramer; disulfide-linked. Mainly monomeric but also detected as part of homodimers and homotetramers. Interacts with 14-3-3 proteins; regulates the phosphorylation of NGB. Could interact (ferrous form) with G-alpha(i) proteins (GTP-bound form). Phosphorylated during hypoxia by ERK1/ERK2. Phosphorylation regulates the heme pocket hexacoordination preventing the association of His-64 with the heme metal center. Thereby, promotes the access of dioxygen and nitrite to the heme and stimulates the nitrite reductase activity. Phosphorylation during hypoxia is stabilized by 14-3-3 proteins. In terms of processing, an intramolecular Cys-46/Cys-55 disulfide bond, not necessarily present in orthologs, regulates the heme pocket hexacoordination preventing the association of His-64 with the heme metal center. Thereby, promotes the access of dioxygen and nitrite to the heme and stimulates the nitrite reductase activity. Predominantly expressed in brain, the strongest expression is seen in the frontal lobe, the subthalamic nucleus and the thalamus.

It is found in the cytoplasm. Its subcellular location is the cytosol. The protein resides in the mitochondrion matrix. It catalyses the reaction Fe(III)-heme b-[protein] + nitric oxide + H2O = Fe(II)-heme b-[protein] + nitrite + 2 H(+). Its function is as follows. Monomeric globin with a bis-histidyl six-coordinate heme-iron atom through which it can bind dioxygen, carbon monoxide and nitric oxide. Could help transport oxygen and increase its availability to the metabolically active neuronal tissues, though its low quantity in tissues as well as its high affinity for dioxygen, which may limit its oxygen-releasing ability, argue against it. The ferrous/deoxygenated form exhibits a nitrite reductase activity and it could produce nitric oxide which in turn inhibits cellular respiration in response to hypoxia. In its ferrous/deoxygenated state, it may also exhibit GDI (Guanine nucleotide Dissociation Inhibitor) activity toward heterotrimeric G-alpha proteins, thereby regulating signal transduction to facilitate neuroprotective responses in the wake of hypoxia and associated oxidative stress. The chain is Neuroglobin from Homo sapiens (Human).